A 140-amino-acid chain; its full sequence is Mialostatin (140 aa).

Positions 1-18 are cleaved as a signal peptide; it reads MAFFKSAVFLVCVVLAAA. Disulfide bonds link cysteine 90–cysteine 103 and cysteine 114–cysteine 134.

The protein belongs to the cystatin family. As to expression, expressed in midgut (at protein level).

It localises to the secreted. Inhibitor of cysteine proteinases. Inhibits several endogenous midgut digestive cysteine proteases, such as cathepsin L1, L3, B and C, but not aspartic protease cathepsin D1 and cysteine protease legumain. Inhibits proteolysis of blood proteins catalyzed by tick gut cysteine cathepsins. Inhibits host cathepsin B (CSTB), C (CTSC), H (CTSH), K (CTSK), L (CTSL) and S (CTSS). This chain is Mialostatin, found in Ixodes ricinus (Common tick).